A 75-amino-acid chain; its full sequence is uncharacterized protein (75 aa).

This is an uncharacterized protein from Bacillus subtilis (strain 168).